A 464-amino-acid chain; its full sequence is Hepatocyte nuclear factor 4-alpha (464 aa).

Residues 57-132 (NSLCAICGDR…AGMKKEAVQN (76 aa)) constitute a DNA-binding region (nuclear receptor). 2 NR C4-type zinc fingers span residues 60 to 80 (CAIC…CDGC) and 96 to 120 (CRFS…LKKC). The NR LBD domain maps to 147–376 (SSLPSINVLI…NLLQEMLLGG (230 aa)). The 9aaTAD signature appears at 367 to 375 (NLLQEMLLG). Over residues 410-421 (SQLHNGQMSTPE) the composition is skewed to polar residues. A disordered region spans residues 410–433 (SQLHNGQMSTPETPQPSPPAGSGA).

The protein belongs to the nuclear hormone receptor family. NR2 subfamily. Homodimerization is required for HNF4-alpha to bind to its recognition site. Expressed in liver and kidney.

The protein resides in the nucleus. In terms of biological role, transcriptional regulator; binds and activates the promoter for the HNF1-alpha gene. Potential initiator of a transcriptional cascade within a subset of cells committed to a specific developmental program. Could be a determinant for asymmetry in early development. May play a role in the regulation of the circadian clock. The protein is Hepatocyte nuclear factor 4-alpha (hnf4a) of Xenopus laevis (African clawed frog).